The chain runs to 433 residues: Adenylosuccinate synthetase (433 aa).

GTP-binding positions include Gly-12–Lys-18 and Gly-40–Thr-42. The active-site Proton acceptor is the Asp-13. The Mg(2+) site is built by Asp-13 and Gly-40. Residues Asp-13–Lys-16, Asn-38–His-41, Thr-130, Arg-144, Gln-225, Thr-240, and Arg-304 contribute to the IMP site. His-41 serves as the catalytic Proton donor. Position 300–306 (Ala-300–Arg-306) interacts with substrate. Residues Arg-306, Lys-332–Asp-334, and Ser-414–Gly-416 each bind GTP.

This sequence belongs to the adenylosuccinate synthetase family. Homodimer. The cofactor is Mg(2+).

It is found in the cytoplasm. The catalysed reaction is IMP + L-aspartate + GTP = N(6)-(1,2-dicarboxyethyl)-AMP + GDP + phosphate + 2 H(+). Its pathway is purine metabolism; AMP biosynthesis via de novo pathway; AMP from IMP: step 1/2. Its function is as follows. Plays an important role in the de novo pathway of purine nucleotide biosynthesis. Catalyzes the first committed step in the biosynthesis of AMP from IMP. This chain is Adenylosuccinate synthetase, found in Geobacter sulfurreducens (strain ATCC 51573 / DSM 12127 / PCA).